The chain runs to 442 residues: Vitellogenin-2 (442 aa).

Positions 1–19 (MNPLRTLCVMACLLAVAMG) are cleaved as a signal peptide. Positions 21 to 33 (PQSGNRSGRRSNS) are enriched in low complexity. Residues 21–44 (PQSGNRSGRRSNSLDNVEQPSNWV) form a disordered region. A phosphoserine mark is found at Ser-31 and Ser-33. Positions 34-44 (LDNVEQPSNWV) are enriched in polar residues. Ser-82 is subject to Phosphoserine. Disordered regions lie at residues 165–200 (QPYETTDYSNEEQSQRSSSEEQQTQRRKQNGEQDDT) and 408–442 (KSPFGRSTPAQKQTGYHQVHQPWRQSSSNQGSRRQ). Thr-170 is subject to Phosphothreonine. A Sulfotyrosine modification is found at Tyr-172. A phosphoserine mark is found at Ser-173, Ser-178, Ser-181, Ser-182, and Ser-183. 2 stretches are compositionally biased toward low complexity: residues 175–186 (EEQSQRSSSEEQ) and 431–442 (RQSSSNQGSRRQ).

This sequence belongs to the AB hydrolase superfamily. Lipase family. Tyrosine sulfation occurs in the female only and plays an essential functional role. Synthesized in the fat body and ovarian follicle cells and accumulate in the oocyte.

Its subcellular location is the secreted. Functionally, vitellogenin is the major yolk protein of eggs where it is used as a food source during embryogenesis. Vitellogenins and their receptor yl/yolkless are required for maintenance of microtubule plus-end orientation towards the posterior pole of oocytes. Involved in polarized localization of germ plasm components, such as osk mRNA and vas protein, to the oocyte posterior cortex. Receptor-mediated endocytosis by yl/yolkless is crucial for actin reorganization, mediated by osk isoform A/Long, required to anchor germ plasm components to the oocyte cortex. The polypeptide is Vitellogenin-2 (Yp2) (Drosophila melanogaster (Fruit fly)).